The chain runs to 133 residues: Putative pre-16S rRNA nuclease (133 aa).

It belongs to the YqgF nuclease family.

It localises to the cytoplasm. Could be a nuclease involved in processing of the 5'-end of pre-16S rRNA. In Bordetella pertussis (strain Tohama I / ATCC BAA-589 / NCTC 13251), this protein is Putative pre-16S rRNA nuclease.